The primary structure comprises 253 residues: Imidazole glycerol phosphate synthase subunit HisF (253 aa).

Catalysis depends on residues Asp-11 and Asp-130.

This sequence belongs to the HisA/HisF family. Heterodimer of HisH and HisF.

It localises to the cytoplasm. The catalysed reaction is 5-[(5-phospho-1-deoxy-D-ribulos-1-ylimino)methylamino]-1-(5-phospho-beta-D-ribosyl)imidazole-4-carboxamide + L-glutamine = D-erythro-1-(imidazol-4-yl)glycerol 3-phosphate + 5-amino-1-(5-phospho-beta-D-ribosyl)imidazole-4-carboxamide + L-glutamate + H(+). It participates in amino-acid biosynthesis; L-histidine biosynthesis; L-histidine from 5-phospho-alpha-D-ribose 1-diphosphate: step 5/9. Its function is as follows. IGPS catalyzes the conversion of PRFAR and glutamine to IGP, AICAR and glutamate. The HisF subunit catalyzes the cyclization activity that produces IGP and AICAR from PRFAR using the ammonia provided by the HisH subunit. The polypeptide is Imidazole glycerol phosphate synthase subunit HisF (Cereibacter sphaeroides (strain ATCC 17029 / ATH 2.4.9) (Rhodobacter sphaeroides)).